A 527-amino-acid polypeptide reads, in one-letter code: Probable bifunctional tRNA threonylcarbamoyladenosine biosynthesis protein (527 aa).

The tract at residues 1 to 323 (MPDIMPDDGL…YRADEVEVAW (323 aa)) is kae1. Fe cation is bound by residues H110, H114, and Y131. L-threonylcarbamoyladenylate is bound by residues 131–135 (YASGA), D163, G176, E180, and N256. Residue D284 participates in Fe cation binding. A Protein kinase domain is found at 333–527 (IGPHEGGVAR…HEVELRGRYL (195 aa)). ATP contacts are provided by residues 340–348 (VARGAEAVV) and K357. D444 (proton acceptor; for kinase activity) is an active-site residue.

This sequence in the N-terminal section; belongs to the KAE1 / TsaD family. It in the C-terminal section; belongs to the protein kinase superfamily. Tyr protein kinase family. BUD32 subfamily. Component of the KEOPS complex that consists of Kae1, Bud32, Cgi121 and Pcc1; the whole complex dimerizes. The cofactor is Fe(2+).

It is found in the cytoplasm. It carries out the reaction L-seryl-[protein] + ATP = O-phospho-L-seryl-[protein] + ADP + H(+). It catalyses the reaction L-threonyl-[protein] + ATP = O-phospho-L-threonyl-[protein] + ADP + H(+). The catalysed reaction is L-threonylcarbamoyladenylate + adenosine(37) in tRNA = N(6)-L-threonylcarbamoyladenosine(37) in tRNA + AMP + H(+). Its function is as follows. Required for the formation of a threonylcarbamoyl group on adenosine at position 37 (t(6)A37) in tRNAs that read codons beginning with adenine. Is a component of the KEOPS complex that is probably involved in the transfer of the threonylcarbamoyl moiety of threonylcarbamoyl-AMP (TC-AMP) to the N6 group of A37. The Kae1 domain likely plays a direct catalytic role in this reaction. The Bud32 domain probably displays kinase activity that regulates Kae1 function. In Methanoculleus marisnigri (strain ATCC 35101 / DSM 1498 / JR1), this protein is Probable bifunctional tRNA threonylcarbamoyladenosine biosynthesis protein.